Consider the following 665-residue polypeptide: UvrABC system protein C (665 aa).

Positions 16–95 (ESPGVYRFRD…IKQYDPRFNV (80 aa)) constitute a GIY-YIG domain. Residues 208-243 (DLMVRRLEREMADASAELEFERAARLRDDLAALRRA) form the UVR domain. The disordered stretch occupies residues 470-507 (EAGVESAGDPATPAGPASTGPGVPDEPRVGTLVDPTTG). Positions 475-491 (SAGDPATPAGPASTGPG) are enriched in low complexity.

It belongs to the UvrC family. In terms of assembly, interacts with UvrB in an incision complex.

It is found in the cytoplasm. In terms of biological role, the UvrABC repair system catalyzes the recognition and processing of DNA lesions. UvrC both incises the 5' and 3' sides of the lesion. The N-terminal half is responsible for the 3' incision and the C-terminal half is responsible for the 5' incision. This chain is UvrABC system protein C, found in Salinispora tropica (strain ATCC BAA-916 / DSM 44818 / JCM 13857 / NBRC 105044 / CNB-440).